The sequence spans 342 residues: tRNA N6-adenosine threonylcarbamoyltransferase (342 aa).

2 residues coordinate Fe cation: H111 and H115. Substrate-binding positions include L134–G138, D167, G180, D184, and N273. Position 298 (D298) interacts with Fe cation.

Belongs to the KAE1 / TsaD family. Fe(2+) serves as cofactor.

Its subcellular location is the cytoplasm. The enzyme catalyses L-threonylcarbamoyladenylate + adenosine(37) in tRNA = N(6)-L-threonylcarbamoyladenosine(37) in tRNA + AMP + H(+). Its function is as follows. Required for the formation of a threonylcarbamoyl group on adenosine at position 37 (t(6)A37) in tRNAs that read codons beginning with adenine. Is involved in the transfer of the threonylcarbamoyl moiety of threonylcarbamoyl-AMP (TC-AMP) to the N6 group of A37, together with TsaE and TsaB. TsaD likely plays a direct catalytic role in this reaction. This chain is tRNA N6-adenosine threonylcarbamoyltransferase, found in Gloeobacter violaceus (strain ATCC 29082 / PCC 7421).